We begin with the raw amino-acid sequence, 954 residues long: DNA repair and telomere maintenance protein NBS1 (954 aa).

The FHA domain occupies 22-85; the sequence is YLFGRTVAEA…KGTLVNGVQI (64 aa). 2 consecutive BRCT domains span residues 107–186 and 244–349; these read TLKI…NAIV and GYTF…LEAI. Residues 368–377 show a composition bias toward polar residues; it reads VSVSASVEPQ. Disordered stretches follow at residues 368–431, 444–506, 528–580, 630–654, and 692–954; these read VSVS…FKGF, QAQS…PLPE, IEAG…KQED, VRQPEPHGPNRTREQDIADGRWDPR, and GIGD…GRRR. Residues 378–393 show a composition bias toward basic and acidic residues; it reads SSEKVRPAVEDRKEVE. Basic residues predominate over residues 416 to 428; the sequence is PHRRERRTGRSRF. A compositionally biased stretch (polar residues) spans 458-471; the sequence is PSASQDSLFVSQRE. The span at 541 to 554 shows a compositional bias: acidic residues; sequence PEPEREDEDVEMVE. 2 stretches are compositionally biased toward basic and acidic residues: residues 640–654 and 704–715; these read RTREQDIADGRWDPR and GRVPRRPKETQT. A compositionally biased stretch (low complexity) spans 726-737; that stretch reads DGSGFAAAAASG. The span at 738 to 751 shows a compositional bias: basic and acidic residues; that stretch reads KGKEKDKENEKEVG. Low complexity-rich tracts occupy residues 801–815 and 826–842; these read EVVSSFPSVIPASEP and RANALRSSAHSSQSQTQ. Residues 936-945 are compositionally biased toward acidic residues; the sequence is GSEEESEDDE.

The protein belongs to the Nibrin family. In terms of assembly, component of the MRN complex composed of two heterodimers RAD50 and MRE11 associated with a single NBS1.

It localises to the nucleus. The protein localises to the chromosome. Component of the MRN complex, which plays a central role in double-strand break (DSB) repair, DNA recombination, maintenance of telomere integrity and meiosis. The MRN complex is involved in the repair of DNA double-strand breaks (DSBs) via homologous recombination (HR), an error-free mechanism which primarily occurs during S and G2 phases. The complex (1) mediates the end resection of damaged DNA, which generates proper single-stranded DNA, a key initial steps in HR, and is (2) required for the recruitment of other repair factors and efficient activation of ATM and ATR upon DNA damage. The MRN complex possesses single-strand endonuclease activity and double-strand-specific 3'-5' exonuclease activity, which are provided by MRE11, to initiate end resection, which is required for single-strand invasion and recombination. Within the MRN complex, NBS1 acts as a protein-protein adapter, which specifically recognizes and binds phosphorylated proteins, promoting their recruitment to DNA damage sites. Recruits MRE11 and RAD50 components of the MRN complex to DSBs in response to DNA damage. This chain is DNA repair and telomere maintenance protein NBS1, found in Chaetomium thermophilum (strain DSM 1495 / CBS 144.50 / IMI 039719) (Thermochaetoides thermophila).